Reading from the N-terminus, the 355-residue chain is Homeobox protein knotted-1-like 12 (355 aa).

2 disordered regions span residues 52 to 82 (AAGP…GGGE) and 207 to 233 (ECVG…PRAE). Over residues 60 to 75 (GHGHPHHGGGHHHSKH) the composition is skewed to basic residues. Basic and acidic residues predominate over residues 218–233 (PSGRENEPPEIDPRAE). The 21-residue stretch at 236 to 256 (ELKFQLLKKYSGYLSSLRQEF) folds into the ELK domain. The homeobox; TALE-type DNA-binding region spans 257–320 (SKKKKKGKLP…NQRKRHWKPS (64 aa)).

Belongs to the TALE/KNOX homeobox family. As to expression, expressed in stems, rachis and inflorescence.

The protein resides in the nucleus. Functionally, probable transcription factor that may be involved in shoot formation during embryogenesis. This is Homeobox protein knotted-1-like 12 (OSH15) from Oryza sativa subsp. japonica (Rice).